We begin with the raw amino-acid sequence, 232 residues long: Caffeoyl-CoA O-methyltransferase (232 aa).

Residue lysine 6 participates in substrate binding. S-adenosyl-L-methionine is bound by residues threonine 48, glutamate 70, 72–73, serine 78, aspartate 96, and alanine 125; that span reads GV. Substrate is bound at residue aspartate 148. Aspartate 148 provides a ligand contact to a divalent metal cation. Aspartate 150 serves as a coordination point for S-adenosyl-L-methionine. Residues aspartate 174 and asparagine 175 each coordinate a divalent metal cation. Asparagine 179 is a binding site for substrate.

Belongs to the class I-like SAM-binding methyltransferase superfamily. Cation-dependent O-methyltransferase family. CCoAMT subfamily. A divalent metal cation serves as cofactor.

The enzyme catalyses (E)-caffeoyl-CoA + S-adenosyl-L-methionine = (E)-feruloyl-CoA + S-adenosyl-L-homocysteine + H(+). The protein operates within aromatic compound metabolism; phenylpropanoid biosynthesis. In terms of biological role, methylates caffeoyl-CoA to feruloyl-CoA and 5-hydroxyferuloyl-CoA to sinapoyl-CoA. Plays a role in the synthesis of feruloylated polysaccharides. Involved in the reinforcement of the plant cell wall. Also involved in the responding to wounding or pathogen challenge by the increased formation of cell wall-bound ferulic acid polymers. The protein is Caffeoyl-CoA O-methyltransferase of Citrus natsudaidai (Natsudaidai orange).